Consider the following 314-residue polypeptide: DNA-directed RNA polymerase subunit alpha (314 aa).

The interval 1 to 227 is alpha N-terminal domain (alpha-NTD); sequence MTYFQIECVE…SLFYPLTNLN (227 aa). The tract at residues 239 to 314 is alpha C-terminal domain (alpha-CTD); sequence EEEINQVLIE…LPKEKNIQNT (76 aa).

The protein belongs to the RNA polymerase alpha chain family. In plastids the minimal PEP RNA polymerase catalytic core is composed of four subunits: alpha, beta, beta', and beta''. When a (nuclear-encoded) sigma factor is associated with the core the holoenzyme is formed, which can initiate transcription.

The protein localises to the plastid. It localises to the chloroplast. It carries out the reaction RNA(n) + a ribonucleoside 5'-triphosphate = RNA(n+1) + diphosphate. Functionally, DNA-dependent RNA polymerase catalyzes the transcription of DNA into RNA using the four ribonucleoside triphosphates as substrates. This is DNA-directed RNA polymerase subunit alpha from Gracilaria tenuistipitata var. liui (Red alga).